Here is a 527-residue protein sequence, read N- to C-terminus: Catalase (527 aa).

Residues 1 to 22 (MADNRDPASDQMKHWKEQRAAQ) show a composition bias toward basic and acidic residues. The interval 1-42 (MADNRDPASDQMKHWKEQRAAQKPDVLTTGGGNPVGDKLNSL) is disordered. Position 2 is a blocked amino end (Ala); alternate (Ala-2). Ala-2 carries the post-translational modification N-acetylalanine; alternate. Ser-9 is subject to Phosphoserine. Lys-13 is subject to N6-succinyllysine. Catalysis depends on residues His-75 and Asn-148. NADP(+) is bound by residues His-194, Phe-198, Ser-201, Arg-203, Asn-213, and Tyr-215. Residue Lys-221 is modified to N6-succinyllysine. N6-acetyllysine is present on Lys-233. Lys-237, Trp-303, and His-305 together coordinate NADP(+). A heme-binding site is contributed by Tyr-358. A phosphoserine mark is found at Ser-417 and Ser-434. Residues Gln-442, Thr-445, and Phe-446 each coordinate NADP(+). N6-acetyllysine; alternate is present on residues Lys-449 and Lys-480. Residues Lys-449 and Lys-480 each carry the N6-succinyllysine; alternate modification. Lys-499 carries the N6-acetyllysine modification. Thr-511 carries the post-translational modification Phosphothreonine. Ser-517 is subject to Phosphoserine. The short motif at 524–527 (KANL) is the Microbody targeting signal; atypical element.

It belongs to the catalase family. As to quaternary structure, homotetramer. Interacts (via microbody targeting signal) with PEX5, monomeric form interacts with PEX5, leading to its translocation into peroxisomes. The cofactor is heme. Requires NADP(+) as cofactor.

Its subcellular location is the peroxisome matrix. It carries out the reaction 2 H2O2 = O2 + 2 H2O. Functionally, catalyzes the degradation of hydrogen peroxide (H(2)O(2)) generated by peroxisomal oxidases to water and oxygen, thereby protecting cells from the toxic effects of hydrogen peroxide. Promotes growth of cells including T-cells, B-cells, myeloid leukemia cells, melanoma cells, mastocytoma cells and normal and transformed fibroblast cells. This Bos taurus (Bovine) protein is Catalase (CAT).